The chain runs to 111 residues: uncharacterized protein (111 aa).

The protein localises to the mitochondrion. This is an uncharacterized protein from Arabidopsis thaliana (Mouse-ear cress).